The following is a 358-amino-acid chain: Methionine aminopeptidase 2 (358 aa).

Histidine 109 is a binding site for substrate. The a divalent metal cation site is built by aspartate 130, aspartate 141, and histidine 210. Histidine 218 lines the substrate pocket. Residues glutamate 243 and glutamate 339 each coordinate a divalent metal cation.

It belongs to the peptidase M24A family. Methionine aminopeptidase eukaryotic type 2 subfamily. The cofactor is Co(2+). It depends on Zn(2+) as a cofactor. Mn(2+) serves as cofactor. Fe(2+) is required as a cofactor.

It localises to the cytoplasm. It catalyses the reaction Release of N-terminal amino acids, preferentially methionine, from peptides and arylamides.. Cotranslationally removes the N-terminal methionine from nascent proteins. The N-terminal methionine is often cleaved when the second residue in the primary sequence is small and uncharged (Met-Ala-, Cys, Gly, Pro, Ser, Thr, or Val). The protein is Methionine aminopeptidase 2 of Encephalitozoon cuniculi (strain GB-M1) (Microsporidian parasite).